The primary structure comprises 473 residues: tRNA-2-methylthio-N(6)-dimethylallyladenosine synthase (473 aa).

The segment at 1-21 is disordered; the sequence is MTQDSALLQAPEAIPSESLRD. The 121-residue stretch at 26-146 folds into the MTTase N-terminal domain; it reads RKVFIKTYGC…LPEALRRAKQ (121 aa). [4Fe-4S] cluster contacts are provided by Cys35, Cys71, Cys109, Cys187, Cys191, and Cys194. Residues 173 to 405 enclose the Radical SAM core domain; that stretch reads RARGVTAFLT…QMLLLKQQQE (233 aa). The TRAM domain maps to 408 to 470; sequence ESCVGKEIDL…TNSLFAEHAE (63 aa).

The protein belongs to the methylthiotransferase family. MiaB subfamily. As to quaternary structure, monomer. [4Fe-4S] cluster serves as cofactor.

It is found in the cytoplasm. It catalyses the reaction N(6)-dimethylallyladenosine(37) in tRNA + (sulfur carrier)-SH + AH2 + 2 S-adenosyl-L-methionine = 2-methylsulfanyl-N(6)-dimethylallyladenosine(37) in tRNA + (sulfur carrier)-H + 5'-deoxyadenosine + L-methionine + A + S-adenosyl-L-homocysteine + 2 H(+). Catalyzes the methylthiolation of N6-(dimethylallyl)adenosine (i(6)A), leading to the formation of 2-methylthio-N6-(dimethylallyl)adenosine (ms(2)i(6)A) at position 37 in tRNAs that read codons beginning with uridine. The sequence is that of tRNA-2-methylthio-N(6)-dimethylallyladenosine synthase from Rhizobium johnstonii (strain DSM 114642 / LMG 32736 / 3841) (Rhizobium leguminosarum bv. viciae).